The sequence spans 780 residues: Lon protease (780 aa).

The 194-residue stretch at 11–204 (IPVLPLRDVV…RLMAIMESEI (194 aa)) folds into the Lon N-terminal domain. ATP is bound at residue 356–363 (GPPGVGKT). Positions 592 to 773 (KNQIGQVIGL…KEVLNLSLEN (182 aa)) constitute a Lon proteolytic domain. Catalysis depends on residues S679 and K722.

It belongs to the peptidase S16 family. Homohexamer. Organized in a ring with a central cavity.

It localises to the cytoplasm. It catalyses the reaction Hydrolysis of proteins in presence of ATP.. Its function is as follows. ATP-dependent serine protease that mediates the selective degradation of mutant and abnormal proteins as well as certain short-lived regulatory proteins. Required for cellular homeostasis and for survival from DNA damage and developmental changes induced by stress. Degrades polypeptides processively to yield small peptide fragments that are 5 to 10 amino acids long. Binds to DNA in a double-stranded, site-specific manner. This Buchnera aphidicola subsp. Baizongia pistaciae (strain Bp) protein is Lon protease.